Consider the following 171-residue polypeptide: Adenine phosphoribosyltransferase (171 aa).

This sequence belongs to the purine/pyrimidine phosphoribosyltransferase family. As to quaternary structure, homodimer.

It localises to the cytoplasm. It catalyses the reaction AMP + diphosphate = 5-phospho-alpha-D-ribose 1-diphosphate + adenine. It participates in purine metabolism; AMP biosynthesis via salvage pathway; AMP from adenine: step 1/1. Its function is as follows. Catalyzes a salvage reaction resulting in the formation of AMP, that is energically less costly than de novo synthesis. The chain is Adenine phosphoribosyltransferase from Nitrosococcus oceani (strain ATCC 19707 / BCRC 17464 / JCM 30415 / NCIMB 11848 / C-107).